A 302-amino-acid polypeptide reads, in one-letter code: Cuticle collagen dpy-13 (302 aa).

3 triple-helical region regions span residues 106 to 135 (GPQGAPGAPGKPGRPGKPGAPGFPGNPGKA), 154 to 210 (GPPG…EGLP), and 219 to 278 (GEPG…PGTP). The tract at residues 108-284 (QGAPGAPGKP…PGTPGERGIC (177 aa)) is disordered. The span at 144-159 (TPPPCKPCPQGPPGAP) shows a compositional bias: pro residues. Over residues 188 to 197 (PKGPNGAPGK) the composition is skewed to low complexity. Pro residues-rich tracts occupy residues 247–257 (QPGPKGPPGPD) and 268–277 (QPGPVGPPGT).

Belongs to the cuticular collagen family. In terms of assembly, collagen polypeptide chains are complexed within the cuticle by disulfide bonds and other types of covalent cross-links.

Functionally, nematode cuticles are composed largely of collagen-like proteins. The cuticle functions both as an exoskeleton and as a barrier to protect the worm from its environment. Mutations in dpy-13 affects the body shape. In Caenorhabditis elegans, this protein is Cuticle collagen dpy-13 (dpy-13).